A 94-amino-acid polypeptide reads, in one-letter code: Pyrimidine/purine nucleoside phosphorylase (94 aa).

The protein belongs to the nucleoside phosphorylase PpnP family.

The enzyme catalyses a purine D-ribonucleoside + phosphate = a purine nucleobase + alpha-D-ribose 1-phosphate. The catalysed reaction is adenosine + phosphate = alpha-D-ribose 1-phosphate + adenine. It catalyses the reaction cytidine + phosphate = cytosine + alpha-D-ribose 1-phosphate. It carries out the reaction guanosine + phosphate = alpha-D-ribose 1-phosphate + guanine. The enzyme catalyses inosine + phosphate = alpha-D-ribose 1-phosphate + hypoxanthine. The catalysed reaction is thymidine + phosphate = 2-deoxy-alpha-D-ribose 1-phosphate + thymine. It catalyses the reaction uridine + phosphate = alpha-D-ribose 1-phosphate + uracil. It carries out the reaction xanthosine + phosphate = alpha-D-ribose 1-phosphate + xanthine. Functionally, catalyzes the phosphorolysis of diverse nucleosides, yielding D-ribose 1-phosphate and the respective free bases. Can use uridine, adenosine, guanosine, cytidine, thymidine, inosine and xanthosine as substrates. Also catalyzes the reverse reactions. The polypeptide is Pyrimidine/purine nucleoside phosphorylase (Pectobacterium carotovorum subsp. carotovorum (strain PC1)).